The following is a 50-amino-acid chain: Insulin (50 aa).

3 cysteine pairs are disulfide-bonded: Cys-7–Cys-36, Cys-19–Cys-49, and Cys-35–Cys-40.

This sequence belongs to the insulin family. As to quaternary structure, heterodimer of a B chain and an A chain linked by two disulfide bonds.

It localises to the secreted. In terms of biological role, insulin decreases blood glucose concentration. It increases cell permeability to monosaccharides, amino acids and fatty acids. It accelerates glycolysis, the pentose phosphate cycle, and glycogen synthesis in liver. The protein is Insulin (ins) of Myoxocephalus scorpius (Shorthorn sculpin).